Consider the following 508-residue polypeptide: Protoporphyrinogen oxidase 2, chloroplastic/mitochondrial (508 aa).

A chloroplast and mitochondrion-targeting transit peptide spans 1-22 (MASGAVADHQIEAVSGKRVAVV). FAD contacts are provided by residues 23–28 (GAGVSG), 46–47 (EA), and 68–71 (GANT). Positions 219-239 (KGGKSRDTKSSPGTKKGSRGS) are disordered. FAD contacts are provided by residues Val-268 and 475 to 477 (LSV).

The protein belongs to the protoporphyrinogen/coproporphyrinogen oxidase family. Protoporphyrinogen oxidase subfamily. Requires FAD as cofactor.

The protein localises to the plastid. Its subcellular location is the chloroplast. The protein resides in the mitochondrion. It catalyses the reaction protoporphyrinogen IX + 3 O2 = protoporphyrin IX + 3 H2O2. Its pathway is porphyrin-containing compound metabolism; protoporphyrin-IX biosynthesis; protoporphyrin-IX from protoporphyrinogen-IX: step 1/1. The protein operates within porphyrin-containing compound metabolism; chlorophyll biosynthesis. Catalyzes the 6-electron oxidation of protoporphyrinogen-IX to form protoporphyrin-IX. The chain is Protoporphyrinogen oxidase 2, chloroplastic/mitochondrial (PPOX2) from Arabidopsis thaliana (Mouse-ear cress).